A 253-amino-acid polypeptide reads, in one-letter code: MVKIFIDPGHGGSDTGASANGLQEKQLTLQTALALRNMLLNEYQNVSVLLSRTSDQTVSLTQRTNAANSWGADYFLSIHMNAGGGTGFEDYIYPGVGAPTTTYRDIMHEEILKVVDFRDRGKKTANFHVLRETAMPALLTENGFVDNTNDAEKLKSSAFIQSIARGHANGLARAFNLSKNAAALYKVQIAAFRTKANADSLAAQAEAKGFDALVIYRDSLYKVQIGAFSSKENAEALVQQAKNAEFDTFIYQE.

Residues Ile4–Ala172 enclose the MurNAc-LAA domain. The SPOR domain maps to Lys179–Glu253. Tandem repeats lie at residues Leu184–Ser219 and Leu220–Glu253. Positions Leu184–Glu253 are 2 X 35 AA approximate tandem repeats.

It belongs to the N-acetylmuramoyl-L-alanine amidase 3 family.

Its subcellular location is the secreted. The catalysed reaction is Hydrolyzes the link between N-acetylmuramoyl residues and L-amino acid residues in certain cell-wall glycopeptides.. In terms of biological role, hydrolyzes the cell wall of M.luteus more efficiently than that of B.licheniformis and B.subtilis. The C-terminal region, including the repeats, determines substrate specificity. In Bacillus licheniformis, this protein is N-acetylmuramoyl-L-alanine amidase CwlM (cwlM).